The primary structure comprises 350 residues: GTPase Obg (350 aa).

An Obg domain is found at 1–158 (MFIDSVKITL…RLVRLELKLI (158 aa)). Positions 159 to 339 (ADVGLVGFPN…LKFMLLEEIK (181 aa)) constitute an OBG-type G domain. Residues 165–172 (GFPNVGKS), 190–194 (FTTLT), 212–215 (DIPG), 280–283 (SKSD), and 320–322 (SSL) contribute to the GTP site. Mg(2+)-binding residues include Ser-172 and Thr-192.

It belongs to the TRAFAC class OBG-HflX-like GTPase superfamily. OBG GTPase family. In terms of assembly, monomer. It depends on Mg(2+) as a cofactor.

The protein localises to the cytoplasm. An essential GTPase which binds GTP, GDP and possibly (p)ppGpp with moderate affinity, with high nucleotide exchange rates and a fairly low GTP hydrolysis rate. Plays a role in control of the cell cycle, stress response, ribosome biogenesis and in those bacteria that undergo differentiation, in morphogenesis control. This chain is GTPase Obg, found in Campylobacter jejuni subsp. jejuni serotype O:2 (strain ATCC 700819 / NCTC 11168).